A 735-amino-acid polypeptide reads, in one-letter code: Alpha-adducin (735 aa).

N-acetylmethionine is present on M1. Residues 1 to 11 (MNGDTRAAVVT) show a composition bias toward low complexity. Positions 1–21 (MNGDTRAAVVTSPPPTTAPHK) are disordered. Residues S12, S59, and S64 each carry the phosphoserine modification. Position 331 is a phosphothreonine (T331). 3 positions are modified to phosphoserine: S334, S353, and S355. T358 carries the post-translational modification Phosphothreonine. Phosphoserine is present on residues S364, S366, S408, and S427. Disordered regions lie at residues 418 to 487 (GHSF…AVPN) and 576 to 735 (RREV…KSDS). T429 is subject to Phosphothreonine. Phosphoserine occurs at positions 431 and 436. The span at 440 to 455 (QQREKTRWLHSGRGDD) shows a compositional bias: basic and acidic residues. T445 is modified (phosphothreonine; by ROCK2). Phosphoserine occurs at positions 464 and 465. Phosphothreonine; by ROCK2 is present on T480. Position 481 is a phosphoserine; by PKA (S481). Over residues 576-601 (RREVERKQKGSEENLDETREQKEKSP) the composition is skewed to basic and acidic residues. Residues S586, S600, and S605 each carry the phosphoserine modification. T610 carries the post-translational modification Phosphothreonine. Position 613 is a phosphoserine (S613). A Phosphothreonine modification is found at T614. Positions 698 to 712 (GSPMDPGSDGSPGKS) are enriched in low complexity. 3 positions are modified to phosphoserine: S705, S708, and S712. Residues 713 to 735 (PSKKKKKFRTPSFLKKSKKKSDS) show a composition bias toward basic residues. S714 is subject to Phosphoserine; by PKC. Positions 715-732 (KKKKKFRTPSFLKKSKKK) are interaction with calmodulin. S724 carries the phosphoserine; by PKA and PKC modification.

The protein belongs to the aldolase class II family. Adducin subfamily. As to quaternary structure, heterodimer of an alpha and a beta subunit or an alpha and a gamma subunit.

It is found in the cytoplasm. The protein resides in the cytoskeleton. Its subcellular location is the cell membrane. In terms of biological role, membrane-cytoskeleton-associated protein that promotes the assembly of the spectrin-actin network. Binds to calmodulin. This chain is Alpha-adducin (Add1), found in Mus musculus (Mouse).